The sequence spans 341 residues: G2/mitotic-specific cyclin C13-1 (341 aa).

The protein belongs to the cyclin family. Cyclin AB subfamily.

Its function is as follows. Essential for the control of the cell cycle at the G2/M (mitosis) transition. Interacts with the CDC2 and CDK2 protein kinases to form MPF. G2/M cyclins accumulate steadily during G2 and are abruptly destroyed at mitosis. The sequence is that of G2/mitotic-specific cyclin C13-1 from Daucus carota (Wild carrot).